The chain runs to 373 residues: Arfaptin-1 (373 aa).

Positions Met-1–Gln-47 are disordered. Ala-2 carries the post-translational modification N-acetylalanine. Ser-5 bears the Phosphoserine mark. Basic and acidic residues predominate over residues Asp-22–His-35. Residues Ser-36, Ser-39, Ser-69, Ser-79, and Ser-132 each carry the phosphoserine modification. Residues Thr-153–Lys-353 form the AH domain. A Phosphothreonine modification is found at Thr-361.

As to quaternary structure, forms homodimers or heterodimers with ARFIP2. Interacts with non-myristoylated GTP-bound ARF3, but not to GDP-bound ARF3. Interacts with ARF1. Binds with lower affinity to ARF5 and with very little affinity to ARF6. Interacts with ARL1. Interacts with ATG9A. Phosphorylated by PRKD1; phosphorylation delocalizes ARFIP1 from the Golgi and disrupts its ability to inhibit the activity of ADP-ribosylation factor, an important component of the vesicle scission machinery.

The protein localises to the golgi apparatus. It localises to the trans-Golgi network membrane. Functionally, plays a role in controlling biogenesis of secretory granules at the trans-Golgi network. Mechanistically, binds ARF-GTP at the neck of a growing secretory granule precursor and forms a protective scaffold. Once the granule precursor has been completely loaded, active PRKD1 phosphorylates ARFIP1 and releases it from ARFs. In turn, ARFs induce fission. Through this mechanism, ensures proper secretory granule formation at the Golgi of pancreatic beta cells. The polypeptide is Arfaptin-1 (Mus musculus (Mouse)).